Consider the following 491-residue polypeptide: LETM1 domain-containing protein LETM2, mitochondrial (491 aa).

Residues 1-25 (MAFYSYNSVLAIARTRFPSHFVHPT) constitute a mitochondrion transit peptide. The Mitochondrial intermembrane segment spans residues 26-177 (CSSYSPSCAF…LLRTCVDFFR (152 aa)). Residues 94–109 (EQATKHPQVTSPQATK) show a composition bias toward polar residues. The interval 94–115 (EQATKHPQVTSPQATKETGMEI) is disordered. The chain crosses the membrane as a helical span at residues 178–198 (LVPFMVFLIVPFMEFLLPVFL). Residues 199–491 (KLFPEMLPST…QNSKASSKGA (293 aa)) are Mitochondrial matrix-facing. A coiled-coil region spans residues 208–235 (TFESESKKEEKQKKKMAVKLELAKFLQE). In terms of domain architecture, Letm1 RBD spans 221–438 (KKMAVKLELA…LAPQLKGTKD (218 aa)). Residues 435-491 (GTKDEDFIQPPPVTSSPITPSTPISLPKGPITSSEEPTLQAKSQMTAQNSKASSKGA) are disordered. Positions 449–461 (SSPITPSTPISLP) are enriched in low complexity. Residues 465 to 491 (ITSSEEPTLQAKSQMTAQNSKASSKGA) are compositionally biased toward polar residues.

The protein localises to the mitochondrion inner membrane. This is LETM1 domain-containing protein LETM2, mitochondrial (LETM2) from Homo sapiens (Human).